We begin with the raw amino-acid sequence, 789 residues long: MLSLRVTCLILSVASTVWTTDTEDKGEFLSEGGGVRGPRVVERHQSQCKDSDWPFCSDDDWNHKCPSGCRMKGLIDEANQDFTNRINKLKNSLFDFQRNNKDSNSLTRNIMEYLRGDFANANNFDNTYGQVSEDLRRRIEILRRKVIEKAQQIQALQSNVRAQLIDMKRLEVDIDIKIRSCKGSCSRAVNREINLQDYEGHQKQLQQVIAKELLPTKDRQYLPALKMSPVPDLVPGSFKSQLQEAPPEWKALTEMRQMRMELERPGKDGGSRGDSPGDSRGDSRGDFATRGPGSKAENPTNPGPGGSGYWRPGNSGSGSDGNRNPGTTGSDGTGDWGTGSPRPGSDSGNFRPANPNWGVFSEFGDSSSPATRKEYHTGKAVTSKGDKELLIGKEKVTSSGTSTTHRSCSKTITKTVTGPDGRREVVKEVITSDDGSDCGDATELDISHSFSGSLDELSERHPDLSGFFDNHFGLISPNFKEFGSKTHSDSDILTNIEDPSSHVPEFSSSSKTSTVKKQVTKTYKMADEAGSEAHREGETRNTKRGRARARPTRDCDDVLQTQTSGAQNGIFSIKPPGSSKVFSVYCDQETSLGGWLLIQQRMDGSLNFNRTWQDYKRGFGSLNDKGEGEFWLGNDYLHLLTLRGSVLRVELEDWAGKEAYAEYHFRVGSEAEGYALQVSSYRGTAGDALVQGSVEEGTEYTSHSNMQFSTFDRDADQWEENCAEVYGGGWWYNSCQAANLNGIYYPGGTYDPRNNSPYEIENGVVWVPFRGADYSLRAVRMKIRPLVGQ.

The N-terminal stretch at 1–19 (MLSLRVTCLILSVASTVWT) is a signal peptide. Ser46 bears the Phosphoserine mark. Residues 69–554 (CRMKGLIDEA…GRARARPTRD (486 aa)) adopt a coiled-coil conformation. Composition is skewed to basic and acidic residues over residues 263-287 (ERPG…RGDF) and 384-396 (KGDK…KEKV). The segment at 263–420 (ERPGKDGGSR…TITKTVTGPD (158 aa)) is disordered. Positions 397–416 (TSSGTSTTHRSCSKTITKTV) are enriched in polar residues. Cysteines 408 and 438 form a disulfide. Ser447 is modified (phosphoserine). Residue Pro504 is modified to 4-hydroxyproline; by P4HA1. Over residues 526–541 (ADEAGSEAHREGETRN) the composition is skewed to basic and acidic residues. The segment at 526–555 (ADEAGSEAHREGETRNTKRGRARARPTRDC) is disordered. A Fibrinogen C-terminal domain is found at 546–787 (RARARPTRDC…AVRMKIRPLV (242 aa)). The N-linked (GlcNAc...) asparagine glycan is linked to Asn609. Positions 714, 716, 718, and 720 each coordinate Ca(2+). A disulfide bridge links Cys722 with Cys735.

Heterohexamer; disulfide linked. Contains 2 sets of 3 non-identical chains (alpha, beta and gamma). The 2 heterotrimers are in head to head conformation with the N-termini in a small central domain. In terms of processing, conversion of fibrinogen to fibrin is triggered by thrombin, which cleaves fibrinopeptides A and B from alpha and beta chains, and thus exposes the N-terminal polymerization sites responsible for the formation of the soft clot. The soft clot is converted into the hard clot by factor XIIIA which catalyzes the epsilon-(gamma-glutamyl)lysine cross-linking between gamma chains (stronger) and between alpha chains (weaker) of different monomers. Forms F13A-mediated cross-links between a glutamine and the epsilon-amino group of a lysine residue, forming fibronectin-fibrinogen heteropolymers. Post-translationally, phosphorylated by FAM20C in the extracellular medium. Expressed in liver.

It is found in the secreted. In terms of biological role, cleaved by the protease thrombin to yield monomers which, together with fibrinogen beta (FGB) and fibrinogen gamma (FGG), polymerize to form an insoluble fibrin matrix. Fibrin has a major function in hemostasis as one of the primary components of blood clots. In addition, functions during the early stages of wound repair to stabilize the lesion and guide cell migration during re-epithelialization. Was originally thought to be essential for platelet aggregation, based on in vitro studies using anticoagulated blood. However, subsequent studies have shown that it is not absolutely required for thrombus formation in vivo. Enhances expression of SELP in activated platelets via an ITGB3-dependent pathway. Maternal fibrinogen is essential for successful pregnancy. Fibrin deposition is also associated with infection, where it protects against IFNG-mediated hemorrhage. May also facilitate the immune response via both innate and T-cell mediated pathways. In Mus musculus (Mouse), this protein is Fibrinogen alpha chain.